Here is a 63-residue protein sequence, read N- to C-terminus: Small ribosomal subunit protein bS21 (63 aa).

This sequence belongs to the bacterial ribosomal protein bS21 family.

The chain is Small ribosomal subunit protein bS21 from Bacteroides fragilis (strain ATCC 25285 / DSM 2151 / CCUG 4856 / JCM 11019 / LMG 10263 / NCTC 9343 / Onslow / VPI 2553 / EN-2).